A 109-amino-acid chain; its full sequence is Large ribosomal subunit protein uL24 (109 aa).

The protein belongs to the universal ribosomal protein uL24 family. Part of the 50S ribosomal subunit.

Its function is as follows. One of two assembly initiator proteins, it binds directly to the 5'-end of the 23S rRNA, where it nucleates assembly of the 50S subunit. One of the proteins that surrounds the polypeptide exit tunnel on the outside of the subunit. This is Large ribosomal subunit protein uL24 from Syntrophobacter fumaroxidans (strain DSM 10017 / MPOB).